The following is a 474-amino-acid chain: MRRVVRQSKFRHVFGQAVKNDQCYDDIRVSRVTWDSSFCAVNPRFVAIIIEASGGGAFLVLPLHKTGRIDKSYPTVCGHTGPVLDIDWCPHNDQVIASGSEDCTVMVWQIPENGLTLSLTEPVVILEGHSKRVGIVAWHPTARNVLLSAGCDNAIIIWNVGTGEALINLDDMHSDMIYNVSWNRNGSLICTASKDKKVRVIDPRKQEIVAEKEKAHEGARPMRAIFLADGNVFTTGFSRMSERQLALWNPKNMQEPIALHEMDTSNGVLLPFYDPDTSIIYLCGKGDSSIRYFEITDESPYVHYLNTFSSKEPQRGMGYMPKRGLDVNKCEIARFFKLHERKCEPIIMTVPRKSDLFQDDLYPDTAGPEAALEAEEWFEGKNADPILISLKHGYIPGKNRDLKVVKKNILDSKPTANKKCDLISIPKKTTDTASVQNEAKLDEILKEIKSIKDTICNQDERISKLEQQMAKIAA.

6 WD repeats span residues 25-70 (DDIR…GRID), 78-118 (GHTG…LTLS), 128-168 (GHSK…ALIN), 172-202 (MHSDMIYNVSWNRNGSLICTASKDKKVRVID), 215-249 (AHEGARPMRAIFLADGNVFTTGFSRMSERQLALWN), and 263-303 (DTSN…PYVH). Residues 436–474 (QNEAKLDEILKEIKSIKDTICNQDERISKLEQQMAKIAA) adopt a coiled-coil conformation. Position 446 is an N6-acetyllysine (Lys446).

This sequence belongs to the WD repeat coronin family. Binds F-actin. Interacts with RCC2. Interacts preferentially with nucleotide-free and GDP-bound RAC1. Interacts with VIM (via head domain). Isoform 1 and isoform 2 appear as homotrimers, while isoform 3 seems to exist as monomers. Interacts with MICAL2; this interaction recruits MICAL2 to the actin filaments. As to expression, ubiquitous.

It localises to the cell membrane. Its subcellular location is the cell projection. The protein resides in the lamellipodium. It is found in the ruffle membrane. The protein localises to the cytoplasm. It localises to the cytoskeleton. Its subcellular location is the cell cortex. The protein resides in the endosome membrane. It is found in the sarcolemma. The protein localises to the myofibril. It localises to the sarcomere. Its subcellular location is the synapse. In terms of biological role, plays a role in directed cell migration by regulating the activation and subcellular location of RAC1. Increases the presence of activated RAC1 at the leading edge of migrating cells. Required for normal organization of the cytoskeleton, including the actin cytoskeleton, microtubules and the vimentin intermediate filaments. Plays a role in endoplasmic reticulum-associated endosome fission: localizes to endosome membrane tubules and promotes recruitment of TMCC1, leading to recruitment of the endoplasmic reticulum to endosome tubules for fission. Endosome membrane fission of early and late endosomes is essential to separate regions destined for lysosomal degradation from carriers to be recycled to the plasma membrane. Required for normal cell proliferation, cell migration, and normal formation of lamellipodia. Required for normal distribution of mitochondria within cells. Its function is as follows. Involved in myogenic differentiation. The protein is Coronin-1C of Homo sapiens (Human).